Reading from the N-terminus, the 73-residue chain is Protein SlyX homolog (73 aa).

It belongs to the SlyX family.

In Actinobacillus pleuropneumoniae serotype 5b (strain L20), this protein is Protein SlyX homolog.